The sequence spans 151 residues: Phosphopantetheine adenylyltransferase (151 aa).

Residue Ser9 participates in substrate binding. ATP is bound by residues 9-10 (SF) and His17. 3 residues coordinate substrate: Lys41, Thr73, and Arg87. ATP-binding positions include 88-90 (GLR), Glu98, and 122-128 (KAHISST).

Belongs to the bacterial CoaD family. In terms of assembly, homohexamer. Requires Mg(2+) as cofactor.

Its subcellular location is the cytoplasm. The enzyme catalyses (R)-4'-phosphopantetheine + ATP + H(+) = 3'-dephospho-CoA + diphosphate. It functions in the pathway cofactor biosynthesis; coenzyme A biosynthesis; CoA from (R)-pantothenate: step 4/5. Reversibly transfers an adenylyl group from ATP to 4'-phosphopantetheine, yielding dephospho-CoA (dPCoA) and pyrophosphate. The polypeptide is Phosphopantetheine adenylyltransferase (Christiangramia forsetii (strain DSM 17595 / CGMCC 1.15422 / KT0803) (Gramella forsetii)).